Reading from the N-terminus, the 120-residue chain is Large ribosomal subunit protein uL18 (120 aa).

It belongs to the universal ribosomal protein uL18 family. Part of the 50S ribosomal subunit; part of the 5S rRNA/L5/L18/L25 subcomplex. Contacts the 5S and 23S rRNAs.

This is one of the proteins that bind and probably mediate the attachment of the 5S RNA into the large ribosomal subunit, where it forms part of the central protuberance. In Rhodopseudomonas palustris (strain BisB18), this protein is Large ribosomal subunit protein uL18.